The primary structure comprises 247 residues: MRLLAPAFKFHFKGGRRTMILSVLSSPALVSGLMVVRAKNPVHSVLFPILVFCDTSGLLILLGLDFSAMISPVVHIGAIAVSFLFVVMMFNIQIAEIHEEVLRYLPVSGIIGLIFWWEMFFILDNETIPLLPTHRNTTSLRYTVYAGKVRSWTNLETLGNLLYTYYSVWFLVSSLILLVAMIGAIVLTMHRTTKVKRQDVFRRNALDSRSHIMNRTISPFGHSHRRSFSSGAGGPPDNYKETFKMWI.

Transmembrane regions (helical) follow at residues 18–38, 44–64, 70–90, 104–124, and 168–188; these read TMIL…VVRA, SVLF…LLGL, ISPV…VMMF, YLPV…FILD, and VWFL…IVLT.

This sequence belongs to the complex I subunit 6 family.

The protein localises to the mitochondrion membrane. It carries out the reaction a ubiquinone + NADH + 5 H(+)(in) = a ubiquinol + NAD(+) + 4 H(+)(out). Core subunit of the mitochondrial membrane respiratory chain NADH dehydrogenase (Complex I) that is believed to belong to the minimal assembly required for catalysis. Complex I functions in the transfer of electrons from NADH to the respiratory chain. The immediate electron acceptor for the enzyme is believed to be ubiquinone. The polypeptide is NADH-ubiquinone oxidoreductase chain 6 (ND6) (Triticum aestivum (Wheat)).